A 179-amino-acid polypeptide reads, in one-letter code: UPF0302 protein BPUM_1989 (179 aa).

This sequence belongs to the UPF0302 family.

The chain is UPF0302 protein BPUM_1989 from Bacillus pumilus (strain SAFR-032).